A 487-amino-acid polypeptide reads, in one-letter code: N-succinylglutamate 5-semialdehyde dehydrogenase (487 aa).

Position 221-226 (221-226) interacts with NAD(+); it reads GSSDTG. Residues E244 and C278 contribute to the active site.

This sequence belongs to the aldehyde dehydrogenase family. AstD subfamily.

The enzyme catalyses N-succinyl-L-glutamate 5-semialdehyde + NAD(+) + H2O = N-succinyl-L-glutamate + NADH + 2 H(+). Its pathway is amino-acid degradation; L-arginine degradation via AST pathway; L-glutamate and succinate from L-arginine: step 4/5. Functionally, catalyzes the NAD-dependent reduction of succinylglutamate semialdehyde into succinylglutamate. The polypeptide is N-succinylglutamate 5-semialdehyde dehydrogenase (Burkholderia ambifaria (strain ATCC BAA-244 / DSM 16087 / CCUG 44356 / LMG 19182 / AMMD) (Burkholderia cepacia (strain AMMD))).